A 338-amino-acid polypeptide reads, in one-letter code: tRNA N6-adenosine threonylcarbamoyltransferase (338 aa).

Positions 111 and 115 each coordinate Fe cation. Residues 134–138, Asp-167, Gly-180, and Asn-272 contribute to the substrate site; that span reads LVSGG. Residue Asp-300 participates in Fe cation binding.

It belongs to the KAE1 / TsaD family. The cofactor is Fe(2+).

The protein resides in the cytoplasm. It carries out the reaction L-threonylcarbamoyladenylate + adenosine(37) in tRNA = N(6)-L-threonylcarbamoyladenosine(37) in tRNA + AMP + H(+). Functionally, required for the formation of a threonylcarbamoyl group on adenosine at position 37 (t(6)A37) in tRNAs that read codons beginning with adenine. Is involved in the transfer of the threonylcarbamoyl moiety of threonylcarbamoyl-AMP (TC-AMP) to the N6 group of A37, together with TsaE and TsaB. TsaD likely plays a direct catalytic role in this reaction. This Shewanella halifaxensis (strain HAW-EB4) protein is tRNA N6-adenosine threonylcarbamoyltransferase.